A 163-amino-acid chain; its full sequence is Small ribosomal subunit protein bS18c (163 aa).

Disordered stretches follow at residues 1 to 52 (MYIS…IGPG) and 144 to 163 (NLRN…SSDC). A compositionally biased stretch (basic residues) spans 7–48 (PFRKSKQPFRKSKQPFHKSKQPFRKFKQPFRKSKQPFRRRSR).

Belongs to the bacterial ribosomal protein bS18 family. Part of the 30S ribosomal subunit.

It localises to the plastid. The protein resides in the chloroplast. This chain is Small ribosomal subunit protein bS18c, found in Saccharum hybrid (Sugarcane).